Consider the following 324-residue polypeptide: Chlorophyllase-1 (324 aa).

The short motif at 136-140 is the GXSXG element; sequence GHSRG. Residue S138 is the Nucleophile of the active site. Active-site charge relay system residues include D168 and H243.

It belongs to the AB hydrolase superfamily. Lipase family. As to expression, expressed in seedlings, leaves, flowers and siliques, but not in roots.

The protein resides in the cytoplasm. The protein localises to the cytosol. It carries out the reaction a chlorophyll + H2O = a chlorophyllide + phytol + H(+). The enzyme catalyses chlorophyll a + H2O = phytol + chlorophyllide a + H(+). The protein operates within porphyrin-containing compound metabolism; chlorophyll degradation. Functionally, catalyzes the hydrolysis of ester bond in chlorophyll to yield chlorophyllide and phytol. Shows a preferential activity toward chlorophyll a. Does not seem to be required for chlorophyll degradation during senescence. May modulate the balance between different plant defense pathways. This chain is Chlorophyllase-1, found in Arabidopsis thaliana (Mouse-ear cress).